The chain runs to 121 residues: NADH-quinone oxidoreductase subunit A 2 (121 aa).

3 helical membrane-spanning segments follow: residues 6 to 26, 60 to 80, and 89 to 109; these read FLPVLFMVTGIVLVAAATLFV, VPFFILAILLVVFDVEAMFLF, and IGFVGYIEMFVFMLLLLVGFA.

The protein belongs to the complex I subunit 3 family. As to quaternary structure, NDH-1 is composed of 14 different subunits. Subunits NuoA, H, J, K, L, M, N constitute the membrane sector of the complex.

It localises to the cell inner membrane. It carries out the reaction a quinone + NADH + 5 H(+)(in) = a quinol + NAD(+) + 4 H(+)(out). NDH-1 shuttles electrons from NADH, via FMN and iron-sulfur (Fe-S) centers, to quinones in the respiratory chain. The immediate electron acceptor for the enzyme in this species is believed to be ubiquinone. Couples the redox reaction to proton translocation (for every two electrons transferred, four hydrogen ions are translocated across the cytoplasmic membrane), and thus conserves the redox energy in a proton gradient. This chain is NADH-quinone oxidoreductase subunit A 2, found in Rhizobium meliloti (strain 1021) (Ensifer meliloti).